The chain runs to 216 residues: Probable nicotinate-nucleotide adenylyltransferase (216 aa).

It belongs to the NadD family.

The enzyme catalyses nicotinate beta-D-ribonucleotide + ATP + H(+) = deamido-NAD(+) + diphosphate. Its pathway is cofactor biosynthesis; NAD(+) biosynthesis; deamido-NAD(+) from nicotinate D-ribonucleotide: step 1/1. In terms of biological role, catalyzes the reversible adenylation of nicotinate mononucleotide (NaMN) to nicotinic acid adenine dinucleotide (NaAD). This Geobacter metallireducens (strain ATCC 53774 / DSM 7210 / GS-15) protein is Probable nicotinate-nucleotide adenylyltransferase.